Reading from the N-terminus, the 410-residue chain is Magnesium transporter NIPA3 (410 aa).

Topologically, residues 1–67 (MGAQVRLPPG…ISANVENKYS (67 aa)) are extracellular. Residues Asn-25, Asn-35, and Asn-50 are each glycosylated (N-linked (GlcNAc...) asparagine). A helical membrane pass occupies residues 68–88 (LYVGLVLAVSSSIFIGSSFIL). Over 89-114 (KKKGLLQLASKGITRAGQGGHSYLKE) the chain is Cytoplasmic. The helical transmembrane segment at 115–135 (WLWWVGLLSMGVGEAANFAAY) threads the bilayer. A topological domain (extracellular) is located at residue Ala-136. Residues 137 to 157 (FAPATLVTPLGALSVLISAIL) traverse the membrane as a helical segment. The Cytoplasmic portion of the chain corresponds to 158–165 (SSYFLNEH). The helical transmembrane segment at 166-186 (LNIHGKIGCILSILGSTVMVI) threads the bilayer. At 187-207 (HAPQEEEVTSLHEMEMKLRDP) the chain is on the extracellular side. A helical membrane pass occupies residues 208 to 228 (GFISFAVIVTVISLVLILIVA). The Cytoplasmic segment spans residues 229 to 233 (PKKGQ). A helical transmembrane segment spans residues 234-254 (TNILVYISICSLIGAFSVSSV). Residues 255–273 (KGLGIAIKELIEWKPVYKH) are Extracellular-facing. A helical transmembrane segment spans residues 274-294 (PLVFVLLAVLVLSVTTQINYL). At 295–304 (NKALDTFNTS) the chain is on the cytoplasmic side. A helical membrane pass occupies residues 305-325 (IVTPIYYVFFTSMVVTCSAIL). The Extracellular segment spans residues 326 to 336 (FQEWYGMTAGD). The chain crosses the membrane as a helical span at residues 337 to 357 (IIGTLSGFFTIIIGIFLLHAF). At 358-410 (KNTDITWSELTSTAKKEAVSLNVSENNYVLLENLECSAPGYNDDVTLFSRTDD) the chain is on the cytoplasmic side.

This sequence belongs to the NIPA family.

The protein resides in the golgi apparatus membrane. The catalysed reaction is Mg(2+)(in) = Mg(2+)(out). Its function is as follows. Acts as a Mg(2+) transporter. Can also transport other divalent cations such as Fe(2+), Sr(2+), Ba(2+), Mn(2+), Cu(2+) and Co(2+) but to a much less extent than Mg(2+). The protein is Magnesium transporter NIPA3 (NIPAL1) of Pongo abelii (Sumatran orangutan).